A 211-amino-acid chain; its full sequence is N-(5'-phosphoribosyl)anthranilate isomerase (211 aa).

The protein belongs to the TrpF family.

It catalyses the reaction N-(5-phospho-beta-D-ribosyl)anthranilate = 1-(2-carboxyphenylamino)-1-deoxy-D-ribulose 5-phosphate. It functions in the pathway amino-acid biosynthesis; L-tryptophan biosynthesis; L-tryptophan from chorismate: step 3/5. This chain is N-(5'-phosphoribosyl)anthranilate isomerase, found in Nitrosomonas europaea (strain ATCC 19718 / CIP 103999 / KCTC 2705 / NBRC 14298).